We begin with the raw amino-acid sequence, 244 residues long: Uridylate kinase (244 aa).

Position 17–20 (17–20 (KVSG)) interacts with ATP. The segment at 25–30 (GDKGFG) is involved in allosteric activation by GTP. Position 59 (Gly-59) interacts with UMP. Gly-60 and Arg-64 together coordinate ATP. UMP contacts are provided by residues Asp-80 and 141-148 (VGNPFFTT). Positions 168, 169, 174, and 177 each coordinate ATP.

Belongs to the UMP kinase family. In terms of assembly, homohexamer.

The protein localises to the cytoplasm. It catalyses the reaction UMP + ATP = UDP + ADP. It functions in the pathway pyrimidine metabolism; CTP biosynthesis via de novo pathway; UDP from UMP (UMPK route): step 1/1. Its activity is regulated as follows. Allosterically activated by GTP. Inhibited by UTP. In terms of biological role, catalyzes the reversible phosphorylation of UMP to UDP. The protein is Uridylate kinase of Ehrlichia ruminantium (strain Welgevonden).